A 304-amino-acid polypeptide reads, in one-letter code: N-carbamoyl-D-amino acid hydrolase (304 aa).

The CN hydrolase domain occupies 5 to 276 (MILAVGQQGP…DEVITAAVDL (272 aa)). Residues Glu-47, Lys-127, and Cys-172 contribute to the active site.

The enzyme catalyses an N-carbamoyl-D-amino acid + H2O + 2 H(+) = a D-alpha-amino acid + NH4(+) + CO2. Functionally, the enzyme catalyzes the hydrolysis of N-carbamoyl-D-amino acids to the corresponding which are useful intermediates in the preparation of beta-lactam antibiotics. Industrial production of beta-lactam antibiotics is now being developed using this enzyme. The sequence is that of N-carbamoyl-D-amino acid hydrolase from Agrobacterium sp. (strain KNK712).